The chain runs to 92 residues: Movement protein (92 aa).

The helical transmembrane segment at 38–58 threads the bilayer; that stretch reads VIALVVILVSVGVFYLAYTLF.

Belongs to the mastrevirus movement protein family. Interacts with the capsid protein (CP). Part of a MP-CP-viral DNA complex.

It is found in the host membrane. In terms of biological role, involved in the viral transport within, and between cells. The protein is Movement protein of Phaseolus vulgaris (Kidney bean).